We begin with the raw amino-acid sequence, 162 residues long: Inorganic pyrophosphatase (162 aa).

Glutamate 8 contributes to the Mg(2+) binding site. 3 residues coordinate substrate: lysine 16, arginine 30, and tyrosine 42. Mg(2+) is bound by residues aspartate 52, aspartate 57, aspartate 84, and aspartate 89. The active-site Proton acceptor is the aspartate 89. Tyrosine 126 is a binding site for substrate.

Belongs to the PPase family. Homohexamer. Requires Mg(2+) as cofactor.

It localises to the cytoplasm. The enzyme catalyses diphosphate + H2O = 2 phosphate + H(+). In terms of biological role, catalyzes the hydrolysis of inorganic pyrophosphate (PPi) forming two phosphate ions. The chain is Inorganic pyrophosphatase from Mycobacterium bovis (strain ATCC BAA-935 / AF2122/97).